A 419-amino-acid polypeptide reads, in one-letter code: Putative trans-acting enoyl reductase MT2525 (419 aa).

An Isoglutamyl lysine isopeptide (Lys-Gln) (interchain with Q-Cter in protein Pup) cross-link involves residue lysine 127. Positions 197-232 (NDPDARRQLSDPYMLSPDRGAEPELGPQPDLPSRRG) are disordered. A helical transmembrane segment spans residues 284–304 (VLAPVVSVVGGGVGNAMFGLA).

The protein belongs to the saccharopine dehydrogenase family. Enoyl reductase subfamily.

The protein localises to the cell membrane. The polypeptide is Putative trans-acting enoyl reductase MT2525 (Mycobacterium tuberculosis (strain CDC 1551 / Oshkosh)).